The primary structure comprises 293 residues: Deubiquitinase OTUD6B (293 aa).

2 disordered regions span residues 1–43 (MEEV…RRKQ) and 57–114 (QKHE…LEKE). An OTU domain is found at 147-284 (LQIKEISSDG…GEHYNSVEPL (138 aa)). A cys-loop region spans residues 152 to 158 (ISSDGHC). Residue Asp-155 is part of the active site. The active-site Nucleophile is Cys-158. Residues 219 to 229 (VADTAAWGGQL) are variable-loop. The interval 267-277 (YMRHAYGLGEH) is his-loop. His-277 is an active-site residue.

The catalysed reaction is Thiol-dependent hydrolysis of ester, thioester, amide, peptide and isopeptide bonds formed by the C-terminal Gly of ubiquitin (a 76-residue protein attached to proteins as an intracellular targeting signal).. Its function is as follows. Deubiquitinating enzyme that may play a role in the ubiquitin-dependent regulation of different cellular processes. This is Deubiquitinase OTUD6B (otud6b) from Danio rerio (Zebrafish).